The chain runs to 346 residues: Extracellular protease (346 aa).

An N-terminal signal peptide occupies residues 1–21 (MMKATPIALLLAGVLASPLCA). Histidine 296 contributes to the Zn(2+) binding site. The active site involves glutamate 297. Zn(2+)-binding residues include histidine 300 and aspartate 309.

The protein belongs to the peptidase M35 family. Requires Zn(2+) as cofactor.

Its function is as follows. Heat-labile protease. This is Extracellular protease from Aeromonas hydrophila.